Here is a 134-residue protein sequence, read N- to C-terminus: Rubredoxin-2 (134 aa).

In terms of domain architecture, Rubredoxin-like spans 1–53 (MAKYQCPDCQYIYDECKGEPHEGFQPNTNWGEIPEEWACPDCAVRDKIDFKML). Cysteine 6, cysteine 9, cysteine 39, and cysteine 42 together coordinate Fe cation. Positions 99–116 (SITDERENTPDNKVERRS) are enriched in basic and acidic residues. The tract at residues 99-134 (SITDERENTPDNKVERRSQSQAVRRSSVKKIKNNKR) is disordered. Residues 124–134 (SSVKKIKNNKR) show a composition bias toward basic residues.

This sequence belongs to the rubredoxin family. Requires Fe(3+) as cofactor.

Its subcellular location is the cytoplasm. The protein operates within hydrocarbon metabolism; alkane degradation. Its function is as follows. Involved in the hydrocarbon hydroxylating system, which transfers electrons from NADH to rubredoxin reductase and then through rubredoxin to alkane 1 monooxygenase. The polypeptide is Rubredoxin-2 (alkF) (Pseudomonas putida (Arthrobacter siderocapsulatus)).